Consider the following 2701-residue polypeptide: Centromere-associated protein E (2701 aa).

The Kinesin motor domain occupies 6-329; sequence AVAVCVRVRP…LQFASTAKYM (324 aa). ATP is bound at residue 86–93; it reads GQTASGKT. Residues 336-2590 are a coiled coil; that stretch reads NEVSTDEALL…SNEVKTWKER (2255 aa). Phosphoserine occurs at positions 611 and 2083. The segment at 2126–2476 is kinetochore-binding domain; sequence KEIEFQKELS…IDLEKMKNAK (351 aa). A disordered region spans residues 2355–2376; the sequence is SGAQVNPTTQDNKNPHVTSRAT. Ser2389 carries the phosphoserine modification. The span at 2508-2527 shows a compositional bias: polar residues; that stretch reads QAQDTSVISEHTDPQPSNKP. 2 disordered regions span residues 2508–2533 and 2588–2701; these read QAQDTSVISEHTDPQPSNKPLTCGGG and KERT…CKTQ. Residues 2510 to 2698 are globular autoinhibitory domain; it reads QDTSVISEHT…ASSGKDVPEC (189 aa). Over residues 2588 to 2600 the composition is skewed to basic and acidic residues; it reads KERTLKREAHKQV. Polar residues predominate over residues 2601 to 2625; the sequence is TCENSPKSPKVTGTASKKKQITPSQ. Positions 2626 to 2640 are enriched in basic and acidic residues; that stretch reads CKERNLQDPVPKESP. 3 positions are modified to phosphoserine: Ser2639, Ser2647, and Ser2651. Position 2698 is a cysteine methyl ester (Cys2698). Cys2698 carries the S-farnesyl cysteine lipid modification. A propeptide spans 2699 to 2701 (removed in mature form); sequence KTQ.

Belongs to the TRAFAC class myosin-kinesin ATPase superfamily. Kinesin family. As to quaternary structure, monomer. Interacts with CENPF. Interacts with BUB1B. Interacts with SEPT7. Interacts with KIF18A. Interacts with PRC1. Interacts with NUF2; this interaction determines kinetochore localization. Interacts with SKAP; this interaction greatly favors SKAP binding to microtubules. Interacts with TRAPPC12. Interacts with CTCF. In terms of processing, the C-terminal inhibitory domain is phosphorylated. Phosphorylation relieves autoinhibition of the kinetochore motor. Sumoylated with SUMO2 and SUMO3. The sumoylation mediates the association to the kinetochore.

Its subcellular location is the chromosome. It localises to the centromere. The protein localises to the kinetochore. It is found in the cytoplasm. The protein resides in the cytoskeleton. Its subcellular location is the spindle. Functionally, microtubule plus-end-directed kinetochore motor which plays an important role in chromosome congression, microtubule-kinetochore conjugation and spindle assembly checkpoint activation. Drives chromosome congression (alignment of chromosomes at the spindle equator resulting in the formation of the metaphase plate) by mediating the lateral sliding of polar chromosomes along spindle microtubules towards the spindle equator and by aiding the establishment and maintenance of connections between kinetochores and spindle microtubules. The transport of pole-proximal chromosomes towards the spindle equator is favored by microtubule tracks that are detyrosinated. Acts as a processive bi-directional tracker of dynamic microtubule tips; after chromosomes have congressed, continues to play an active role at kinetochores, enhancing their links with dynamic microtubule ends. Suppresses chromosome congression in NDC80-depleted cells and contributes positively to congression only when microtubules are stabilized. Plays an important role in the formation of stable attachments between kinetochores and spindle microtubules The stabilization of kinetochore-microtubule attachment also requires CENPE-dependent localization of other proteins to the kinetochore including BUB1B, MAD1 and MAD2. Plays a role in spindle assembly checkpoint activation (SAC) via its interaction with BUB1B resulting in the activation of its kinase activity, which is important for activating SAC. Necessary for the mitotic checkpoint signal at individual kinetochores to prevent aneuploidy due to single chromosome loss. In Homo sapiens (Human), this protein is Centromere-associated protein E (CENPE).